Consider the following 423-residue polypeptide: MEELTRSLVNDVEVLNNHFVSTGHPLPSFDRHTPTVVLPNDASPDAHAARERILDNALRLFQLAAGPSAYLLNLQTGYQYASCVRWLCHFQIFHLVPLEGSIAYADLAVLAKAPEPQLISVVRMAMTNGLFLESPPQHLAHSATSALLRNDADFHDWAVTMSDLSFPTAFAMVEAHERWPNSVEGNQTAYNIAVGSELPFFSHLAEQSDRKRQFAGFMRSMARSQGTDVEKLAEGWDWAALGQACVVDVGGSTGHTSVALARKYPDLNFVVEDLPEVVAEGPGYLSYLDDAQDLKSRIGYRAHSFFDPQPVQDADVYMLRMILHNWSFDDCVRILSRLVQTLKPGARIIIVDIVLPDPGVVSASKERLLRVQDLIMQQVFNSMERYLENWMDIFRKVDERLEVKRIVEPPGSLMSLIELSMAA.

Asp273 serves as a coordination point for S-adenosyl-L-methionine. The active-site Proton acceptor is the His324.

Belongs to the class I-like SAM-binding methyltransferase superfamily. Cation-independent O-methyltransferase family.

Its pathway is secondary metabolite biosynthesis. O-methyltransferase; part of the gene cluster that mediates the biosynthesis of a methylated derivative of known natural products orthosporin and diaporthin. Within the pathway, aoiF catalyzes the biotransformation of orthosporin to diaporthin but also of diaporthin to the final product, by performing a tandem methylation of the polyketide core. Orthosporin is produced by an oxidoreductase that has still to be identified and that catalyzes the stereospecific reduction of the carbonyl moiety of the hexaketide isocoumarin scaffold produced by the non-reducing polyketide synthase aoiG to generate the S-configured secondary alcohol at C-11. This is O-methyltransferase aoiF from Aspergillus oryzae (strain ATCC 42149 / RIB 40) (Yellow koji mold).